Here is a 396-residue protein sequence, read N- to C-terminus: Na(+)/H(+) antiporter NhaA 1 (396 aa).

A run of 11 helical transmembrane segments spans residues 15–35 (AGIFLLAAAVFALIFSNVGFL), 60–80 (LEFWVNDALMAIFFFSIGLEL), 96–116 (FLPSFAAIGGVIFPAVIFAVI), 126–146 (GWAIPTATDIAFAVGVMALLG), 155–175 (IFVLTLAIMDDLCAIVIIALF), 179–199 (ALNFTYLGLAFVCFLVLLVMC), 207–227 (IPFVIMSILLWIFVLHSGIHA), 255–275 (SLGYFVNYVVLPLFAFANAGV), 290–312 (PLGVMLGLFLGKQLGIFTFSWFL), 329–349 (LYAVAIICGIGFTMALFVDNL), and 363–383 (LAILLGSIISGVVGYFVAKAV).

It belongs to the NhaA Na(+)/H(+) (TC 2.A.33) antiporter family.

The protein localises to the cell inner membrane. The catalysed reaction is Na(+)(in) + 2 H(+)(out) = Na(+)(out) + 2 H(+)(in). Functionally, na(+)/H(+) antiporter that extrudes sodium in exchange for external protons. This chain is Na(+)/H(+) antiporter NhaA 1, found in Campylobacter hominis (strain ATCC BAA-381 / DSM 21671 / CCUG 45161 / LMG 19568 / NCTC 13146 / CH001A).